A 130-amino-acid polypeptide reads, in one-letter code: Fluoride-specific ion channel FluC (130 aa).

The next 4 membrane-spanning stretches (helical) occupy residues 3–23 (FVFL…YFVG), 39–59 (GTFS…HLAV), 67–87 (FGIF…SYGL), and 102–122 (VSYA…GWFL). Residues Gly77 and Thr80 each contribute to the Na(+) site.

This sequence belongs to the fluoride channel Fluc/FEX (TC 1.A.43) family.

Its subcellular location is the cell inner membrane. The catalysed reaction is fluoride(in) = fluoride(out). Its activity is regulated as follows. Na(+) is not transported, but it plays an essential structural role and its presence is essential for fluoride channel function. Functionally, fluoride-specific ion channel. Important for reducing fluoride concentration in the cell, thus reducing its toxicity. This Helicobacter pylori (strain ATCC 700392 / 26695) (Campylobacter pylori) protein is Fluoride-specific ion channel FluC.